A 172-amino-acid chain; its full sequence is MQKYGSKKIGATSATSSNKQKVQIELTDEQRQEIKEAFDLFDMDGSGKIDAKELKVAMRALGFEPKKEEIKKMISGIDNGSGKIDFNDFLQLMTAKMSEKDSHAEIMKAFRLFDEDDSGFITFANLKRVAKDLGENMTDEELREMIEEADRSNQGQISKEDFLRIMKKTNLF.

The disordered stretch occupies residues 1–23 (MQKYGSKKIGATSATSSNKQKVQ). The segment covering 12–21 (TSATSSNKQK) has biased composition (polar residues). 4 consecutive EF-hand domains span residues 29–64 (EQRQ…LGFE), 65–99 (PKKE…KMSE), 101–136 (DSHA…LGEN), and 137–172 (MTDE…TNLF). The Ca(2+) site is built by D42, D44, S46, K48, and E53.

It belongs to the centrin family. In terms of assembly, monomer.

The protein resides in the cytoplasm. It is found in the cytoskeleton. Its subcellular location is the microtubule organizing center. The protein localises to the centrosome. Functionally, plays a fundamental role in microtubule-organizing center structure and function. The protein is Caltractin (CTN) of Naegleria gruberi (Amoeba).